The sequence spans 277 residues: Shikimate dehydrogenase (NADP(+)) (277 aa).

Shikimate-binding positions include 19-21 and Thr-66; that span reads SKS. Lys-70 serves as the catalytic Proton acceptor. Asp-82 is a binding site for NADP(+). Shikimate-binding residues include Asn-91 and Asp-107. NADP(+) contacts are provided by residues 133 to 137, 157 to 162, and Leu-222; these read GAGGA and NRTRAR. Tyr-224 provides a ligand contact to shikimate. Residue Gly-245 participates in NADP(+) binding.

It belongs to the shikimate dehydrogenase family. As to quaternary structure, homodimer.

It catalyses the reaction shikimate + NADP(+) = 3-dehydroshikimate + NADPH + H(+). It participates in metabolic intermediate biosynthesis; chorismate biosynthesis; chorismate from D-erythrose 4-phosphate and phosphoenolpyruvate: step 4/7. Functionally, involved in the biosynthesis of the chorismate, which leads to the biosynthesis of aromatic amino acids. Catalyzes the reversible NADPH linked reduction of 3-dehydroshikimate (DHSA) to yield shikimate (SA). This chain is Shikimate dehydrogenase (NADP(+)), found in Roseobacter denitrificans (strain ATCC 33942 / OCh 114) (Erythrobacter sp. (strain OCh 114)).